We begin with the raw amino-acid sequence, 962 residues long: Glycine dehydrogenase (decarboxylating) (962 aa).

The residue at position 709 (K709) is an N6-(pyridoxal phosphate)lysine.

The protein belongs to the GcvP family. As to quaternary structure, the glycine cleavage system is composed of four proteins: P, T, L and H. Pyridoxal 5'-phosphate is required as a cofactor.

It carries out the reaction N(6)-[(R)-lipoyl]-L-lysyl-[glycine-cleavage complex H protein] + glycine + H(+) = N(6)-[(R)-S(8)-aminomethyldihydrolipoyl]-L-lysyl-[glycine-cleavage complex H protein] + CO2. The glycine cleavage system catalyzes the degradation of glycine. The P protein binds the alpha-amino group of glycine through its pyridoxal phosphate cofactor; CO(2) is released and the remaining methylamine moiety is then transferred to the lipoamide cofactor of the H protein. This chain is Glycine dehydrogenase (decarboxylating), found in Shewanella frigidimarina (strain NCIMB 400).